Reading from the N-terminus, the 49-residue chain is Zinc-containing ferredoxin (49 aa).

Positions 1-36 (GIDPNYRTSRQVVGEHQGHKVYGPVDPPKVLGIHGT) are N-terminal extension. His16 and His19 together coordinate Zn(2+). At Lys29 the chain carries N6-methyllysine. His34 contacts Zn(2+). The interval 37 to 49 (IVXVDFDLCIADG) is ferredoxin. Cys45 provides a ligand contact to [3Fe-4S] cluster.

[3Fe-4S] cluster is required as a cofactor. Requires [4Fe-4S] cluster as cofactor. It depends on Zn(2+) as a cofactor.

Its function is as follows. Ferredoxins are iron-sulfur proteins that transfer electrons in a wide variety of metabolic reactions. The chain is Zinc-containing ferredoxin (zfx) from Acidianus infernus.